The sequence spans 909 residues: MRVGSRINDEEAMPLTAPESRARDSIDSSSTASISLTLVEGASHATTEPSKPAHNHNGRAQGNYAEKYRDDLEEDWEEDNYIPSNGKSNQRRTLIVFWLLVALCVGGWAVAFLFFVTSPGNKTSTSPHSGSNSPEGDVTKPGIPATGKKIPLDDAIGGVWSPAEHTISWITGAKGEDGLLLQKSEGGTGPYLHVEDVRNIHGTQSNNNSIVLMKESVFFVNDERISPEKVWPSPDLKTVLAMTREKKNWRHSFTGLYWLFDVETQTAQPLDPDAPNGRIQLATWSPTSDAVAFTRDNNLYIRNLTSKSVKAITTDGGTNLFYGIPDWVYEEEVFEGNCATWWSLDGKYISYLRTNETLVPEFPIDFYLSSPPGYSPKPNEESYPYVQQIKYPKAGAPNPTVNLQFYDVEREESFSVDVKDTLKDDDRLIVEVIPGSKGKVLVRETNRESYIVKVAVIDANKREGKIVRSDNIDEIDGGWVEPSHTTTYIPADPSAGRPDDGYIDTVIHEGYIHLAYFTPLENPKPKMLTTGKWEVVAAPSGVDLKNNVVYFVATKESPIDRHVYSVKLDGSELQMLKDSDKSAYYDVSFSHGAGYMLLKYQGPQIPWQKLISSPSNADNYIEILEENKKLAKLSNEFSLPSLHYSTINVDGFELPVVERRPPNFDETKKYPVLFQLYGGPGSQTVNKKFLVNFQTYVASSLGYIVVTVDGRGTGFNGRKFKCIVRRNLGHYESHDQIQAAKAWGKKPYVDKTRMAIWGWSYGGFMTLKTLEQDAGETFQYGMAVAPVTNWRYYDSVYTERYMHMPQNNEGGYENASISNATNLSQNTRFLIMHGSADDNVHFQNTLTLLDKLDILGVHNYDMHVFPDSNHGIYFHHAYKMVHQRKYFNLSFLGHGFFSFYSNFLPIRSF.

The tract at residues 1–63 (MRVGSRINDE…HNHNGRAQGN (63 aa)) is disordered. Topologically, residues 1-94 (MRVGSRINDE…NGKSNQRRTL (94 aa)) are cytoplasmic. The segment covering 27 to 38 (DSSSTASISLTL) has biased composition (low complexity). The chain crosses the membrane as a helical; Signal-anchor for type II membrane protein span at residues 95-115 (IVFWLLVALCVGGWAVAFLFF). At 116–909 (VTSPGNKTST…YSNFLPIRSF (794 aa)) the chain is on the vacuolar side. An N-linked (GlcNAc...) asparagine glycan is attached at N121. Residues 123 to 134 (TSTSPHSGSNSP) are compositionally biased toward polar residues. The tract at residues 123–144 (TSTSPHSGSNSPEGDVTKPGIP) is disordered. 3 N-linked (GlcNAc...) asparagine glycosylation sites follow: N207, N303, and N355. The active-site Charge relay system is the S760. N814, N819, and N822 each carry an N-linked (GlcNAc...) asparagine glycan. Active-site charge relay system residues include D837 and H870. N888 carries N-linked (GlcNAc...) asparagine glycosylation.

Belongs to the peptidase S9B family.

The protein resides in the vacuole membrane. It carries out the reaction Release of an N-terminal dipeptide, Xaa-Yaa-|-Zaa-, from a polypeptide, preferentially when Yaa is Pro, provided Zaa is neither Pro nor hydroxyproline.. Type IV dipeptidyl-peptidase which removes N-terminal dipeptides sequentially from polypeptides having unsubstituted N-termini provided that the penultimate residue is proline. The polypeptide is Probable dipeptidyl-aminopeptidase B (DAPB) (Arthroderma benhamiae (strain ATCC MYA-4681 / CBS 112371) (Trichophyton mentagrophytes)).